A 225-amino-acid chain; its full sequence is Probable polyketide biosynthesis zinc-dependent hydrolase BaeB (225 aa).

Residues histidine 62, histidine 64, aspartate 66, histidine 67, histidine 123, aspartate 140, and histidine 181 each coordinate Zn(2+).

Belongs to the metallo-beta-lactamase superfamily. Zn(2+) is required as a cofactor.

The protein resides in the cytoplasm. The protein operates within antibiotic biosynthesis; bacillaene biosynthesis. Its function is as follows. Probably involved in some intermediate steps for the synthesis of the antibiotic polyketide bacillaene which is involved in secondary metabolism. In Bacillus velezensis (strain DSM 23117 / BGSC 10A6 / LMG 26770 / FZB42) (Bacillus amyloliquefaciens subsp. plantarum), this protein is Probable polyketide biosynthesis zinc-dependent hydrolase BaeB (baeB).